Consider the following 492-residue polypeptide: 3-octaprenyl-4-hydroxybenzoate carboxy-lyase (492 aa).

Asparagine 172 provides a ligand contact to Mn(2+). Residues 175–177 (IYR), 189–191 (RWL), and 194–195 (RG) contribute to the prenylated FMN site. Glutamate 238 contributes to the Mn(2+) binding site. The Proton donor role is filled by aspartate 287.

It belongs to the UbiD family. Homohexamer. Prenylated FMN serves as cofactor. It depends on Mn(2+) as a cofactor.

Its subcellular location is the cell membrane. It carries out the reaction a 4-hydroxy-3-(all-trans-polyprenyl)benzoate + H(+) = a 2-(all-trans-polyprenyl)phenol + CO2. It participates in cofactor biosynthesis; ubiquinone biosynthesis. Functionally, catalyzes the decarboxylation of 3-octaprenyl-4-hydroxy benzoate to 2-octaprenylphenol, an intermediate step in ubiquinone biosynthesis. The protein is 3-octaprenyl-4-hydroxybenzoate carboxy-lyase of Pasteurella multocida (strain Pm70).